A 365-amino-acid chain; its full sequence is Glucan endo-1,3-beta-glucosidase, basic vacuolar isoform (365 aa).

Residues 1–32 (MSTLHKHNTPQMAAITLLGLLLVASSIEIAGA) form the signal peptide. Glutamate 128 acts as the Proton donor in catalysis. Residue glutamate 273 is the Nucleophile of the active site. Residues 349 to 365 (VSGSVETNATASLISEI) constitute a propeptide, removed in mature form. Asparagine 356 carries an N-linked (GlcNAc...) asparagine glycan.

The protein belongs to the glycosyl hydrolase 17 family.

The protein resides in the vacuole. It carries out the reaction Hydrolysis of (1-&gt;3)-beta-D-glucosidic linkages in (1-&gt;3)-beta-D-glucans.. Functionally, implicated in the defense of plants against pathogens. In Nicotiana plumbaginifolia (Leadwort-leaved tobacco), this protein is Glucan endo-1,3-beta-glucosidase, basic vacuolar isoform (GN2).